A 266-amino-acid chain; its full sequence is Phosphatidylglycerol--prolipoprotein diacylglyceryl transferase (266 aa).

A run of 7 helical transmembrane segments spans residues 10 to 30 (VAIA…LVGI), 56 to 76 (LVFW…VFFY), 92 to 112 (WEGG…TWWF), 120 to 140 (FFEL…AGRI), 172 to 192 (PSQL…LWFY), 200 to 220 (MAVS…VEFV), and 234 to 254 (WLTM…GLIA). Arg-139 is a binding site for a 1,2-diacyl-sn-glycero-3-phospho-(1'-sn-glycerol).

This sequence belongs to the Lgt family.

The protein resides in the cell inner membrane. The enzyme catalyses L-cysteinyl-[prolipoprotein] + a 1,2-diacyl-sn-glycero-3-phospho-(1'-sn-glycerol) = an S-1,2-diacyl-sn-glyceryl-L-cysteinyl-[prolipoprotein] + sn-glycerol 1-phosphate + H(+). It functions in the pathway protein modification; lipoprotein biosynthesis (diacylglyceryl transfer). Catalyzes the transfer of the diacylglyceryl group from phosphatidylglycerol to the sulfhydryl group of the N-terminal cysteine of a prolipoprotein, the first step in the formation of mature lipoproteins. The polypeptide is Phosphatidylglycerol--prolipoprotein diacylglyceryl transferase (Ectopseudomonas mendocina (strain ymp) (Pseudomonas mendocina)).